We begin with the raw amino-acid sequence, 639 residues long: Threonine--tRNA ligase (639 aa).

Residues 1–61 form the TGS domain; that stretch reads MIKVALKDGS…DTDCDLNLFK (61 aa). A catalytic region spans residues 242-532; the sequence is DHRKLGKELG…LIEHYAGKFP (291 aa). Residues Cys333, His384, and His509 each contribute to the Zn(2+) site.

The protein belongs to the class-II aminoacyl-tRNA synthetase family. In terms of assembly, homodimer. It depends on Zn(2+) as a cofactor.

It localises to the cytoplasm. The catalysed reaction is tRNA(Thr) + L-threonine + ATP = L-threonyl-tRNA(Thr) + AMP + diphosphate + H(+). Catalyzes the attachment of threonine to tRNA(Thr) in a two-step reaction: L-threonine is first activated by ATP to form Thr-AMP and then transferred to the acceptor end of tRNA(Thr). Also edits incorrectly charged L-seryl-tRNA(Thr). This chain is Threonine--tRNA ligase, found in Clostridioides difficile (strain 630) (Peptoclostridium difficile).